The chain runs to 448 residues: Carbon catabolite repressor protein 4 homolog 3 (448 aa).

Over residues 50-67 (SSTSGPSDSNPESSSNRS) the composition is skewed to low complexity. The segment at 50–92 (SSTSGPSDSNPESSSNRSYSRRWQNPLPRRQHPDQIPSSQIAR) is disordered. A Mg(2+)-binding site is contributed by Glu162.

It belongs to the CCR4/nocturin family. In terms of assembly, component of the CCR4-NOT complex, at least composed of CRR4 and CAF1 proteins. Requires Mg(2+) as cofactor.

It localises to the nucleus. It is found in the cytoplasm. It catalyses the reaction Exonucleolytic cleavage of poly(A) to 5'-AMP.. Functionally, acts as a catalytic component of the CCR4-NOT core complex, which in the nucleus seems to be a general transcription factor, and in the cytoplasm the major mRNA deadenylase involved in mRNA turnover. The protein is Carbon catabolite repressor protein 4 homolog 3 (CCR4-3) of Arabidopsis thaliana (Mouse-ear cress).